A 727-amino-acid polypeptide reads, in one-letter code: Elongation factor 2 (727 aa).

One can recognise a tr-type G domain in the interval 19-260; the sequence is DQIRNMGICA…MSIKHLPNPL (242 aa). Residues 28–35, 94–98, and 148–151 contribute to the GTP site; these read AHIDHGKT, DTPGH, and NKVD. Position 603 is a diphthamide (histidine 603).

It belongs to the TRAFAC class translation factor GTPase superfamily. Classic translation factor GTPase family. EF-G/EF-2 subfamily.

It is found in the cytoplasm. Its function is as follows. Catalyzes the GTP-dependent ribosomal translocation step during translation elongation. During this step, the ribosome changes from the pre-translocational (PRE) to the post-translocational (POST) state as the newly formed A-site-bound peptidyl-tRNA and P-site-bound deacylated tRNA move to the P and E sites, respectively. Catalyzes the coordinated movement of the two tRNA molecules, the mRNA and conformational changes in the ribosome. The polypeptide is Elongation factor 2 (Methanococcus maripaludis (strain C5 / ATCC BAA-1333)).